A 582-amino-acid chain; its full sequence is Probable DNA ligase (582 aa).

Residue Glu-248 coordinates ATP. Residue Lys-250 is the N6-AMP-lysine intermediate of the active site. ATP is bound by residues Arg-255, Arg-270, Glu-299, Phe-339, Arg-416, and Lys-422.

The protein belongs to the ATP-dependent DNA ligase family. It depends on Mg(2+) as a cofactor.

It catalyses the reaction ATP + (deoxyribonucleotide)n-3'-hydroxyl + 5'-phospho-(deoxyribonucleotide)m = (deoxyribonucleotide)n+m + AMP + diphosphate.. In terms of biological role, DNA ligase that seals nicks in double-stranded DNA during DNA replication, DNA recombination and DNA repair. The chain is Probable DNA ligase from Persephonella marina (strain DSM 14350 / EX-H1).